The following is a 144-amino-acid chain: Toxin MT0934 (144 aa).

In terms of biological role, toxic component of a type II toxin-antitoxin (TA) system. Its toxic effect is neutralized by coexpression with cognate antitoxin MT0933. The polypeptide is Toxin MT0934 (Mycobacterium tuberculosis (strain CDC 1551 / Oshkosh)).